The following is a 413-amino-acid chain: L-cysteine:1D-myo-inositol 2-amino-2-deoxy-alpha-D-glucopyranoside ligase (413 aa).

Zn(2+) is bound at residue cysteine 43. L-cysteinyl-5'-AMP-binding positions include 43–46, threonine 58, and 81–83; these read CGIT and NIT. Residues 45-55 carry the 'HIGH' region motif; sequence ITPYDATHLGH. The short motif at 187-192 is the 'ERGGDP' region element; sequence ERGGDP. Tryptophan 227 contacts L-cysteinyl-5'-AMP. Cysteine 231 contacts Zn(2+). 249–251 is a binding site for L-cysteinyl-5'-AMP; that stretch reads GND. Histidine 256 serves as a coordination point for Zn(2+). Valine 283 is an L-cysteinyl-5'-AMP binding site. The 'KMSKS' region motif lies at 289–293; the sequence is KMSKS.

This sequence belongs to the class-I aminoacyl-tRNA synthetase family. MshC subfamily. Monomer. Zn(2+) serves as cofactor.

The enzyme catalyses 1D-myo-inositol 2-amino-2-deoxy-alpha-D-glucopyranoside + L-cysteine + ATP = 1D-myo-inositol 2-(L-cysteinylamino)-2-deoxy-alpha-D-glucopyranoside + AMP + diphosphate + H(+). Functionally, catalyzes the ATP-dependent condensation of GlcN-Ins and L-cysteine to form L-Cys-GlcN-Ins. The sequence is that of L-cysteine:1D-myo-inositol 2-amino-2-deoxy-alpha-D-glucopyranoside ligase from Gordonia bronchialis (strain ATCC 25592 / DSM 43247 / BCRC 13721 / JCM 3198 / KCTC 3076 / NBRC 16047 / NCTC 10667) (Rhodococcus bronchialis).